A 353-amino-acid chain; its full sequence is Phosphate acyltransferase (353 aa).

It belongs to the PlsX family. As to quaternary structure, homodimer. Probably interacts with PlsY.

It is found in the cytoplasm. The enzyme catalyses a fatty acyl-[ACP] + phosphate = an acyl phosphate + holo-[ACP]. It functions in the pathway lipid metabolism; phospholipid metabolism. Its function is as follows. Catalyzes the reversible formation of acyl-phosphate (acyl-PO(4)) from acyl-[acyl-carrier-protein] (acyl-ACP). This enzyme utilizes acyl-ACP as fatty acyl donor, but not acyl-CoA. The protein is Phosphate acyltransferase of Rhodopseudomonas palustris (strain HaA2).